The chain runs to 253 residues: GTP cyclohydrolase 1 type 2 homolog (253 aa).

The a divalent metal cation site is built by histidine 64, histidine 65, aspartate 101, histidine 222, and glutamate 226.

The protein belongs to the GTP cyclohydrolase I type 2/NIF3 family. In terms of assembly, homohexamer.

The chain is GTP cyclohydrolase 1 type 2 homolog from Halobacterium salinarum (strain ATCC 700922 / JCM 11081 / NRC-1) (Halobacterium halobium).